Consider the following 653-residue polypeptide: Intermembrane lipid transfer protein vps13l (653 aa).

The segment at 5–49 adopts a B box-type zinc-finger fold; that stretch reads ISELKCQQHDKLVTIYCCACDAYFCKKCDKEKHSQDDNQEDSLHI. Residues cysteine 10, histidine 13, cysteine 32, and histidine 37 each contribute to the Zn(2+) site. 3 disordered regions span residues 159 to 232, 248 to 420, and 627 to 653; these read NLID…NRKK, HILN…EDDS, and EKSN…PNEN. The segment covering 195-213 has biased composition (low complexity); it reads SPSPSRSSESNSTTNNNNN. Positions 266-277 are enriched in acidic residues; that stretch reads DYDDDDDNDDDN. Residues 278-293 show a composition bias toward low complexity; sequence NNNNNNNNNNNNNNNN. The segment covering 314–330 has biased composition (basic and acidic residues); the sequence is ETEKEIENVENKIDNKP. Acidic residues predominate over residues 366-381; the sequence is IFEEEEEEEEDEDEVG.

This sequence belongs to the VPS13 family.

The protein localises to the membrane. Mediates the transfer of lipids between membranes at organelle contact sites. The polypeptide is Intermembrane lipid transfer protein vps13l (vps13l) (Dictyostelium discoideum (Social amoeba)).